The chain runs to 187 residues: Ribosome-recycling factor (187 aa).

This sequence belongs to the RRF family.

The protein resides in the cytoplasm. In terms of biological role, responsible for the release of ribosomes from messenger RNA at the termination of protein biosynthesis. May increase the efficiency of translation by recycling ribosomes from one round of translation to another. The protein is Ribosome-recycling factor of Parabacteroides distasonis (strain ATCC 8503 / DSM 20701 / CIP 104284 / JCM 5825 / NCTC 11152).